We begin with the raw amino-acid sequence, 258 residues long: MNEIHKTAIISPKAEIDKEVVIGPYCIIGDNVKIGRGTRLINHVQIEGITEIGQNCTIFPFTTIGFPPQDIKYKGEPTGVKIGNNNTIREYVTIHRASVAGDGWTVIGDSNFIMAYVHIAHDCKIGNSVIMANLATLAGHVQVEDFAFIGGLVAIHQFTRIGAYAMIGGFSGVGQDVPPFTMASGPRAKLYGLNSVGLKRRGFSDETINILKKAYKILFRDKLQLKEAIDKVKKELPQIPEIIHLLEFIEANKRGICR.

This sequence belongs to the transferase hexapeptide repeat family. LpxA subfamily. As to quaternary structure, homotrimer.

It is found in the cytoplasm. The enzyme catalyses a (3R)-hydroxyacyl-[ACP] + UDP-N-acetyl-alpha-D-glucosamine = a UDP-3-O-[(3R)-3-hydroxyacyl]-N-acetyl-alpha-D-glucosamine + holo-[ACP]. The protein operates within glycolipid biosynthesis; lipid IV(A) biosynthesis; lipid IV(A) from (3R)-3-hydroxytetradecanoyl-[acyl-carrier-protein] and UDP-N-acetyl-alpha-D-glucosamine: step 1/6. Functionally, involved in the biosynthesis of lipid A, a phosphorylated glycolipid that anchors the lipopolysaccharide to the outer membrane of the cell. This chain is Acyl-[acyl-carrier-protein]--UDP-N-acetylglucosamine O-acyltransferase, found in Thermodesulfovibrio yellowstonii (strain ATCC 51303 / DSM 11347 / YP87).